The sequence spans 439 residues: MAKPIVAIVGRPNVGKSTLFNKLAGKRISIVQDTPGVTRDRIYAEAEWLNYKFTMIDTGGIEPKSEDIIVSQMRRQAQIAIEMANVIIFLVDGKEGLAPADKEVAQMLRKSKKPVVLVVNKIDKLKDENNAYEFYNLGIGDPVTISSSQALGLGDMLDRVVEYFKDDESAGEDDERINIAFIGKPNVGKSSLINKLLGEERLIVSDIPGTTRDSIDSYVDTDFGEFTLIDTAGLRRKSKVKEEIERYSVIRTYASIERADVCILMIDATEGISEQDQKIIGYAHDINKAILVIVNKWDLVEKDDKTMDKFKKELKVNLSFMPYAKYLFISAKTGQRVVKVLQTAKECYDNYNKRVKTGVLNDVISQAIMMKEPPIVGTKRLKIYYVTQIGTKPPTFIFFVNDPACIHFSYQRYLENQLRENFDFQGTGIKSEFRERKEK.

2 EngA-type G domains span residues 4–168 (PIVA…KDDE) and 177–352 (INIA…DNYN). GTP-binding positions include 10–17 (GRPNVGKS), 57–61 (DTGGI), 120–123 (NKID), 183–190 (GKPNVGKS), 230–234 (DTAGL), and 295–298 (NKWD). The KH-like domain maps to 353–437 (KRVKTGVLND…GIKSEFRERK (85 aa)).

It belongs to the TRAFAC class TrmE-Era-EngA-EngB-Septin-like GTPase superfamily. EngA (Der) GTPase family. In terms of assembly, associates with the 50S ribosomal subunit.

In terms of biological role, GTPase that plays an essential role in the late steps of ribosome biogenesis. This Clostridium botulinum (strain ATCC 19397 / Type A) protein is GTPase Der.